The following is a 435-amino-acid chain: GTPase Obg (435 aa).

The Obg domain occupies 1–158 (MFLDTAKVSV…RQLELELKIL (158 aa)). The 178-residue stretch at 159 to 336 (ADVGLVGFPS…LLEATAELLA (178 aa)) folds into the OBG-type G domain. Residues 165–172 (GFPSVGKS), 190–194 (FTTIV), 212–215 (DLPG), 282–285 (NKMD), and 317–319 (SSL) contribute to the GTP site. Mg(2+) contacts are provided by Ser172 and Thr192. The OCT domain occupies 357–435 (GFAAEEKAFE…IGKFEFEFVD (79 aa)).

It belongs to the TRAFAC class OBG-HflX-like GTPase superfamily. OBG GTPase family. In terms of assembly, monomer. Mg(2+) is required as a cofactor.

The protein resides in the cytoplasm. Its function is as follows. An essential GTPase which binds GTP, GDP and possibly (p)ppGpp with moderate affinity, with high nucleotide exchange rates and a fairly low GTP hydrolysis rate. Plays a role in control of the cell cycle, stress response, ribosome biogenesis and in those bacteria that undergo differentiation, in morphogenesis control. This is GTPase Obg from Streptococcus equi subsp. zooepidemicus (strain MGCS10565).